Consider the following 587-residue polypeptide: MEGESVKPSPQPTEQAGDGEKNRRMITVNPAHMGKAFKVMNELRSKRLLCDVMIVAEDVEVEAHRVVLAACSPYFCAMFTGDMSESKAKKIEIKDVDGQTLSKLIDYIYTAEIEVTEENVQVLLPAASLLQLMDVRQNCCDFLQSQLHPTNCLGIRAFADVHTCTDLLQQANAYAEQHFPEVMLGEEFLSLSLDQVCSLISSDKLTVSSEEKVFEAVISWINYEKETRLDHMAKLMEHVRLPLLPRDYLVQTVEEEALIKNNNTCKDFLIEAMKYHLLPLDQRLLIKNPRTKPRTPVSLPKVMIVVGGQAPKAIRSVECYDFEEGRWDQIAELPSRRCRAGVVFMAGHVYAVGGFNGSLRVRTVDVYDGVKDQWTSIASMQERRSTLGAAVLNDLLYAVGGFDGSTGLASVEAYSYKTNEWFFVAPMNTRRSSVGVGVVEGKLYAVGGYDGASRQCLSTVEQYNPATNEWIYVADMSTRRSGAGVGVLSGQLYATGGHDGPLVRKSVEVYDPGTNTWKQVADMNMCRRNAGVCAVNGLLYVVGGDDGSCNLASVEYYNPVTDKWTLLPTNMSTGRSYAGQWVSASGA.

The segment at 1-24 (MEGESVKPSPQPTEQAGDGEKNRR) is disordered. The BTB domain occupies 50-117 (CDVMIVAEDV…IYTAEIEVTE (68 aa)). In terms of domain architecture, BACK spans 152 to 254 (CLGIRAFADV…PRDYLVQTVE (103 aa)). T295 carries the phosphothreonine modification. Kelch repeat units lie at residues 302 to 347 (VMIV…FMAG), 348 to 394 (HVYA…VLND), 396 to 441 (LYAV…VVEG), 442 to 490 (KLYA…VLSG), 491 to 537 (QLYA…AVNG), and 539 to 585 (LYVV…VSAS). Phosphothreonine is present on T375. Phosphoserine occurs at positions 376 and 433.

The protein belongs to the KLHL3 family. In terms of assembly, homodimer. Component of the BCR(KLHL3) E3 ubiquitin ligase complex, at least composed of CUL3 and KLHL3 and RBX1. Interacts with CLDN8. Post-translationally, phosphorylation at Ser-433 by PKA or PKC decreases the interaction with WNK1 and WNK4, leading to inhibit their degradation by the BCR(KLHL3) complex. Phosphorylated at Ser-433 by PKC in response to angiotensin II signaling, decreasing ability to promote degradation of WNK1 and WNK4, leading to activation of Na-Cl cotransporter SLC12A3/NCC. Phosphorylation at Ser-433 is increased by insulin. Dephosphorylated at Ser-433 by calcineurin PPP3CA, promoting degradation of WNK1 and WNK4.

It is found in the cytoplasm. The protein localises to the cytoskeleton. Its subcellular location is the cytosol. It participates in protein modification; protein ubiquitination. Substrate-specific adapter of a BCR (BTB-CUL3-RBX1) E3 ubiquitin ligase complex that acts as a regulator of ion transport in the distal nephron. The BCR(KLHL3) complex acts by mediating ubiquitination and degradation of WNK1 and WNK4, two activators of Na-Cl cotransporter SLC12A3/NCC in distal convoluted tubule cells of kidney, thereby regulating NaCl reabsorption. The BCR(KLHL3) complex also mediates ubiquitination and degradation of WNK3. The BCR(KLHL3) complex also mediates ubiquitination of CLDN8, a tight-junction protein required for paracellular chloride transport in the kidney, leading to its degradation. This is Kelch-like protein 3 (Klhl3) from Rattus norvegicus (Rat).